Here is a 465-residue protein sequence, read N- to C-terminus: Glutamate--tRNA ligase (465 aa).

The 'HIGH' region signature appears at 11 to 21; it reads PSPTGFIHLGN. The segment at 118-139 is disordered; the sequence is GEKPRYDGTWRPAPGKILPPPP. Residues 243-247 carry the 'KMSKS' region motif; the sequence is KMSKR. Lysine 246 lines the ATP pocket.

The protein belongs to the class-I aminoacyl-tRNA synthetase family. Glutamate--tRNA ligase type 1 subfamily. As to quaternary structure, monomer.

It is found in the cytoplasm. The enzyme catalyses tRNA(Glu) + L-glutamate + ATP = L-glutamyl-tRNA(Glu) + AMP + diphosphate. Its function is as follows. Catalyzes the attachment of glutamate to tRNA(Glu) in a two-step reaction: glutamate is first activated by ATP to form Glu-AMP and then transferred to the acceptor end of tRNA(Glu). This Ralstonia pickettii (strain 12J) protein is Glutamate--tRNA ligase.